Here is a 505-residue protein sequence, read N- to C-terminus: Gap junction alpha-10 protein (505 aa).

The Cytoplasmic segment spans residues 1–16 (MGDWNLLGGILEEVHS). The helical transmembrane segment at 17–37 (HSTIVGKIWLTILFIFRMLVL) threads the bilayer. Topologically, residues 38 to 76 (GVAAEDVWDDEQSAFACNTQQPGCNNICYDDAFPISLIR) are extracellular. Residues 77-97 (FWVLQIIFVSSPSLVYMGHAL) form a helical membrane-spanning segment. Residues 98-165 (YRLRDFEKQR…TYVLHILTRS (68 aa)) are Cytoplasmic-facing. The helical transmembrane segment at 166–186 (VLEVGFMIGQYILYGFQMHPI) threads the bilayer. At 187-209 (YKCTQAPCPNSVDCFVSRPTEKT) the chain is on the extracellular side. Residues 210–230 (IFMLFMHSIAAISLLLNILEI) form a helical membrane-spanning segment. Topologically, residues 231–505 (FHLGIRKIMR…IIHETYVYVY (275 aa)) are cytoplasmic. A compositionally biased stretch (polar residues) spans 371-383 (TMTASQHRPSSAL). The disordered stretch occupies residues 371–491 (TMTASQHRPS…SKSSHVDSPP (121 aa)). Residues 437-446 (MSEKGQRHSD) are compositionally biased toward basic and acidic residues. Positions 447–460 (SGSSRSLNSSCLDF) are enriched in low complexity.

Belongs to the connexin family. Alpha-type (group II) subfamily. As to quaternary structure, a connexon is composed of a hexamer of connexins. In terms of tissue distribution, low levels were detected in skin, heart, kidney, testis, ovary, intestine. Expression not detected in brain, sciatic nerve or liver. According to PubMed:15147297 expression is detected only in horizontal cells in the inner nuclear layer of the retina and not in other neurons of the central nervous system or tissues. Detected in the outer plexiform layer of the retina (at protein level).

The protein resides in the cell membrane. Its subcellular location is the cell junction. The protein localises to the gap junction. In terms of biological role, one gap junction consists of a cluster of closely packed pairs of transmembrane channels, the connexons, through which materials of low MW diffuse from one cell to a neighboring cell. Involved in tracer coupling between horizontal cells of the retina. May play a role in the regulation of horizontal cell patterning. The polypeptide is Gap junction alpha-10 protein (Gja10) (Mus musculus (Mouse)).